Here is a 434-residue protein sequence, read N- to C-terminus: dTDP-D-glucose 4,6-dehydratase (434 aa).

Substrate is bound at residue T134. D135 acts as the Proton donor in catalysis. Residues E136 and Y169 each act as proton acceptor in the active site. The segment covering 286-309 (NNNNNNNNNNNNNNNNNNNNNNNN) has biased composition (low complexity). The tract at residues 286–310 (NNNNNNNNNNNNNNNNNNNNNNNND) is disordered.

This sequence belongs to the NAD(P)-dependent epimerase/dehydratase family. dTDP-glucose dehydratase subfamily. The cofactor is NAD(+).

It carries out the reaction dTDP-alpha-D-glucose = dTDP-4-dehydro-6-deoxy-alpha-D-glucose + H2O. This Dictyostelium discoideum (Social amoeba) protein is dTDP-D-glucose 4,6-dehydratase (tgds).